The chain runs to 264 residues: MKQYLDLMKKVLEEGTPKADRTGTGTRSIFGHQMRFNLQDGFPLVTTKKCHLRSIIHELLWFLNGDTNVAYLHENKVSIWDEWADENGDLGPVYGKQWRSWGAADGRQIDQLKNVLTQLRQDPDSRRIIVSAWNVGELDKMALAPCHAFFQFYVADGKLSCQLYQRSCDIFLGLPFNIASYALLVHMVAQQCDLDVGDFVWTGGDTHLYNNHLEQTQLQLSREPRALPKLVIKRRPDTLFDYRFEDFEIEGYDPHPTIKAPVAI.

DUMP is bound at residue arginine 21. (6R)-5,10-methylene-5,6,7,8-tetrahydrofolate is bound at residue histidine 51. Position 126-127 (126-127 (RR)) interacts with dUMP. The active-site Nucleophile is cysteine 146. DUMP contacts are provided by residues 166–169 (RSCD), asparagine 177, and 207–209 (HLY). Aspartate 169 is a binding site for (6R)-5,10-methylene-5,6,7,8-tetrahydrofolate. (6R)-5,10-methylene-5,6,7,8-tetrahydrofolate is bound at residue alanine 263.

It belongs to the thymidylate synthase family. Bacterial-type ThyA subfamily. In terms of assembly, homodimer.

It localises to the cytoplasm. The enzyme catalyses dUMP + (6R)-5,10-methylene-5,6,7,8-tetrahydrofolate = 7,8-dihydrofolate + dTMP. The protein operates within pyrimidine metabolism; dTTP biosynthesis. In terms of biological role, catalyzes the reductive methylation of 2'-deoxyuridine-5'-monophosphate (dUMP) to 2'-deoxythymidine-5'-monophosphate (dTMP) while utilizing 5,10-methylenetetrahydrofolate (mTHF) as the methyl donor and reductant in the reaction, yielding dihydrofolate (DHF) as a by-product. This enzymatic reaction provides an intracellular de novo source of dTMP, an essential precursor for DNA biosynthesis. The sequence is that of Thymidylate synthase from Pectobacterium carotovorum subsp. carotovorum (strain PC1).